The chain runs to 295 residues: Nucleotide-binding protein Sare_3328 (295 aa).

19–26 (GVSGGGRS) is an ATP binding site. Residue 70–73 (DVRS) coordinates GTP.

Belongs to the RapZ-like family.

In terms of biological role, displays ATPase and GTPase activities. This is Nucleotide-binding protein Sare_3328 from Salinispora arenicola (strain CNS-205).